The primary structure comprises 209 residues: Ribosomal RNA large subunit methyltransferase E (209 aa).

Positions 63, 65, 83, 99, and 124 each coordinate S-adenosyl-L-methionine. K164 serves as the catalytic Proton acceptor.

It belongs to the class I-like SAM-binding methyltransferase superfamily. RNA methyltransferase RlmE family.

The protein localises to the cytoplasm. It carries out the reaction uridine(2552) in 23S rRNA + S-adenosyl-L-methionine = 2'-O-methyluridine(2552) in 23S rRNA + S-adenosyl-L-homocysteine + H(+). Its function is as follows. Specifically methylates the uridine in position 2552 of 23S rRNA at the 2'-O position of the ribose in the fully assembled 50S ribosomal subunit. In Yersinia enterocolitica serotype O:8 / biotype 1B (strain NCTC 13174 / 8081), this protein is Ribosomal RNA large subunit methyltransferase E.